The primary structure comprises 105 residues: Diuretic hormone class 2 (105 aa).

The signal sequence occupies residues 1 to 23 (MTVLCTLMAFVMVVAISSLTVDA). The propeptide occupies 24-63 (IPHSHESYWDQQDDIDRDEFLELLSRLSRTVMNRPEMENS). A Proline amide modification is found at P96. The propeptide occupies 101–105 (RSEQA).

As to expression, expressed in central brain, antennal lobes, retrocerebral complex and gnathal, thoracic and abdominal ganglia but not in optical lobes (at protein level).

The protein resides in the secreted. Its function is as follows. Regulation of fluid secretion. Stimulates Malpighian tubules fluid secretion. In Camponotus floridanus (Florida carpenter ant), this protein is Diuretic hormone class 2.